Here is a 430-residue protein sequence, read N- to C-terminus: Histidine--tRNA ligase (430 aa).

The protein belongs to the class-II aminoacyl-tRNA synthetase family. As to quaternary structure, homodimer.

The protein resides in the cytoplasm. The enzyme catalyses tRNA(His) + L-histidine + ATP = L-histidyl-tRNA(His) + AMP + diphosphate + H(+). In Acinetobacter baumannii (strain AB307-0294), this protein is Histidine--tRNA ligase.